A 216-amino-acid polypeptide reads, in one-letter code: Uracil phosphoribosyltransferase (216 aa).

Residues Arg32, Arg41, 75–78 (MGKI), and Lys77 each bind GTP. Position 82 is a phosphoserine (Ser82). 5-phospho-alpha-D-ribose 1-diphosphate is bound at residue Arg85. Residue Arg102 coordinates GTP. 5-phospho-alpha-D-ribose 1-diphosphate is bound at residue Arg110. Arg131 contacts GTP. 5-phospho-alpha-D-ribose 1-diphosphate contacts are provided by residues Asp137 and 137-145 (DPMLATGGS). D-ribose 5-phosphate is bound at residue Tyr201. Uracil contacts are provided by residues Leu202 and 207–209 (GDF). Asp208 lines the 5-phospho-alpha-D-ribose 1-diphosphate pocket.

The protein belongs to the UPRTase family. Mg(2+) is required as a cofactor.

It carries out the reaction UMP + diphosphate = 5-phospho-alpha-D-ribose 1-diphosphate + uracil. It functions in the pathway pyrimidine metabolism; UMP biosynthesis via salvage pathway; UMP from uracil: step 1/1. Its activity is regulated as follows. Allosterically activated by GTP. Functionally, catalyzes the conversion of uracil and 5-phospho-alpha-D-ribose 1-diphosphate (PRPP) to UMP and diphosphate in the pyrimidine salvage pathway. The chain is Uracil phosphoribosyltransferase (FUR1) from Saccharomyces cerevisiae (strain ATCC 204508 / S288c) (Baker's yeast).